Consider the following 555-residue polypeptide: Vetispiradiene synthase 1 (555 aa).

D308, D312, D451, T455, and E459 together coordinate Mg(2+). The DDXXD motif motif lies at 308–312 (DDTFD).

This sequence belongs to the terpene synthase family. Tpsa subfamily. The cofactor is Mg(2+).

The protein localises to the cytoplasm. It carries out the reaction (2E,6E)-farnesyl diphosphate = (-)-vetispiradiene + diphosphate. Its pathway is secondary metabolite biosynthesis; terpenoid biosynthesis. Functionally, sesquiterpene synthase that catalyzes the formation of vetispiradiene from trans,trans-farnesyl diphosphate. The initial internal cyclization produces the monocyclic intermediate germacrene A. This Hyoscyamus muticus (Egyptian henbane) protein is Vetispiradiene synthase 1.